Here is a 293-residue protein sequence, read N- to C-terminus: uncharacterized protein (293 aa).

Residues 1–58 (MELKQLITFITAAEHVNFTLTAKMLNYAQSSVTSQIKSLEEEIGTPLFERLGKRLILT) enclose the HTH lysR-type domain. A DNA-binding region (H-T-H motif) is located at residues 18 to 37 (FTLTAKMLNYAQSSVTSQIK).

This sequence belongs to the LysR transcriptional regulatory family.

It is found in the cytoplasm. This is an uncharacterized protein from Bacillus subtilis (strain 168).